The following is an 879-amino-acid chain: Translation initiation factor IF-2 (879 aa).

The interval 48–261 (EAFPPPPEPA…RPHKSKKQRR (214 aa)) is disordered. The segment covering 82–111 (PAADAAAPPAVTTPPSAAPAGATTSAPSDA) has biased composition (low complexity). Composition is skewed to pro residues over residues 119–142 (PPRP…PSGP), 152–163 (SPMPRPMPPRPV), and 173–197 (PGIP…PPRP). Residues 198 to 213 (AAGRAAPGRGAPIRLP) show a composition bias toward low complexity. Gly residues predominate over residues 228-246 (PGVGGRGRGAPGGAFGRGP). The span at 251 to 260 (SRPHKSKKQR) shows a compositional bias: basic residues. The tr-type G domain maps to 372–543 (PRPPVVTVMG…AILLTADAAL (172 aa)). The tract at residues 381–388 (GHVDHGKT) is G1. 381–388 (GHVDHGKT) is a binding site for GTP. The tract at residues 406-410 (GITQH) is G2. The interval 431-434 (DTPG) is G3. Residues 431 to 435 (DTPGH) and 485 to 488 (NKID) contribute to the GTP site. The interval 485–488 (NKID) is G4. Positions 521–523 (SAL) are G5.

The protein belongs to the TRAFAC class translation factor GTPase superfamily. Classic translation factor GTPase family. IF-2 subfamily.

Its subcellular location is the cytoplasm. Its function is as follows. One of the essential components for the initiation of protein synthesis. Protects formylmethionyl-tRNA from spontaneous hydrolysis and promotes its binding to the 30S ribosomal subunits. Also involved in the hydrolysis of GTP during the formation of the 70S ribosomal complex. In Acidothermus cellulolyticus (strain ATCC 43068 / DSM 8971 / 11B), this protein is Translation initiation factor IF-2.